A 205-amino-acid chain; its full sequence is Small ribosomal subunit protein uS4 (205 aa).

The interval 25–48 is disordered; it reads KTIEARPTPPGQHGAKNTRRKKSD. Residues 94–157 enclose the S4 RNA-binding domain; it reads RRLDNVVFRA…TKLPIVVETL (64 aa).

The protein belongs to the universal ribosomal protein uS4 family. In terms of assembly, part of the 30S ribosomal subunit. Contacts protein S5. The interaction surface between S4 and S5 is involved in control of translational fidelity.

In terms of biological role, one of the primary rRNA binding proteins, it binds directly to 16S rRNA where it nucleates assembly of the body of the 30S subunit. Functionally, with S5 and S12 plays an important role in translational accuracy. The polypeptide is Small ribosomal subunit protein uS4 (Methylobacillus flagellatus (strain ATCC 51484 / DSM 6875 / VKM B-1610 / KT)).